The following is a 329-amino-acid chain: DNA repair and recombination protein RadA (329 aa).

107–114 (GEFGSGKS) lines the ATP pocket.

The protein belongs to the eukaryotic RecA-like protein family.

Functionally, involved in DNA repair and in homologous recombination. Binds and assemble on single-stranded DNA to form a nucleoprotein filament. Hydrolyzes ATP in a ssDNA-dependent manner and promotes DNA strand exchange between homologous DNA molecules. The polypeptide is DNA repair and recombination protein RadA (Methanocorpusculum labreanum (strain ATCC 43576 / DSM 4855 / Z)).